The primary structure comprises 160 residues: MLGNKFVAQLALQQLKNRGLLTSAPRLTSVRHRFAWGSDAVGPNVPVGGKMGASENPELHTYDGDYRGTISKGDKPIPDYFYRTPTTGRTYIDRCVTYFISAVIWAWFSYHMYYHSGHLLGHWYMPYLTEFSDEELGIPKDSAEDPEYWGNHKKEYGTYR.

Belongs to the complex I NDUFB2 subunit family. As to quaternary structure, complex I is composed of 45 different subunits.

The protein localises to the mitochondrion inner membrane. Accessory subunit of the mitochondrial membrane respiratory chain NADH dehydrogenase (Complex I), that is believed not to be involved in catalysis. Complex I functions in the transfer of electrons from NADH to the respiratory chain. The immediate electron acceptor for the enzyme is believed to be ubiquinone. This Caenorhabditis briggsae protein is Probable NADH dehydrogenase [ubiquinone] 1 beta subcomplex subunit 2, mitochondrial.